We begin with the raw amino-acid sequence, 59 residues long: MAEIRVGKNETLDSALRRFKRSCQKAGVLAEARKHEYYEKPSVKRKKKSEAARKRKSFR.

A disordered region spans residues 40–59; sequence KPSVKRKKKSEAARKRKSFR. Over residues 43-59 the composition is skewed to basic residues; it reads VKRKKKSEAARKRKSFR.

The protein belongs to the bacterial ribosomal protein bS21 family.

This Desulforamulus reducens (strain ATCC BAA-1160 / DSM 100696 / MI-1) (Desulfotomaculum reducens) protein is Small ribosomal subunit protein bS21.